The following is a 568-amino-acid chain: Protein NDNF (568 aa).

The N-terminal stretch at methionine 1–threonine 19 is a signal peptide. Fibronectin type-III domains lie at asparagine 261 to phenylalanine 331 and proline 445 to threonine 564. N-linked (GlcNAc...) asparagine glycosylation occurs at asparagine 322.

In terms of assembly, binds heparin and chondroitin sulfate. Post-translationally, O-glycosylated; contains heparan sulfate and chondroitin sulfate. N-glycosylated. As to expression, expressed in neurons along the gonadotropin-releasing hormone (GnRH) expressing neurons migratory route.

The protein localises to the secreted. Secretory protein that plays a role in various cellular processes. Acts as a chemorepellent acting on gonadotropin-releasing hormone (GnRH) expressing neurons regulating their migration to the hypothalamus. Also promotes neuron migration, growth and survival as well as neurite outgrowth and is involved in the development of the olfactory system. May also act through the regulation of growth factors activity and downstream signaling. Also regulates extracellular matrix assembly and cell adhesiveness. Promotes endothelial cell survival, vessel formation and plays an important role in the process of revascularization through NOS3-dependent mechanisms. The sequence is that of Protein NDNF (NDNF) from Homo sapiens (Human).